Here is a 194-residue protein sequence, read N- to C-terminus: Ion-translocating oxidoreductase complex subunit A (194 aa).

Transmembrane regions (helical) follow at residues 5 to 25 (VLIL…FLGL), 47 to 67 (FVLT…LVPF), 72 to 92 (LRTI…EMFV), 102 to 122 (VLGV…VALL), 135 to 155 (LTYG…FAAM), and 172 to 192 (SIGL…SGLI).

It belongs to the NqrDE/RnfAE family. In terms of assembly, the complex is composed of six subunits: RnfA, RnfB, RnfC, RnfD, RnfE and RnfG.

It is found in the cell inner membrane. Part of a membrane-bound complex that couples electron transfer with translocation of ions across the membrane. In Alcanivorax borkumensis (strain ATCC 700651 / DSM 11573 / NCIMB 13689 / SK2), this protein is Ion-translocating oxidoreductase complex subunit A.